Here is an 87-residue protein sequence, read N- to C-terminus: U3-theraphotoxin-Hhn1a 7 (87 aa).

The first 24 residues, 1–24 (MVNMKASMFLTFAGLVLLFVVSYA), serve as a signal peptide directing secretion. Positions 25 to 52 (SESEEKEFPKEMLSSIFAVDNDFKQEER) are excised as a propeptide. Intrachain disulfides connect Cys54/Cys67, Cys61/Cys72, and Cys66/Cys79.

This sequence belongs to the neurotoxin 10 (Hwtx-1) family. 51 (Hntx-8) subfamily. Hntx-8 sub-subfamily. Expressed by the venom gland.

It localises to the secreted. In terms of biological role, ion channel inhibitor. The sequence is that of U3-theraphotoxin-Hhn1a 7 from Cyriopagopus hainanus (Chinese bird spider).